Consider the following 340-residue polypeptide: Anthranilate phosphoribosyltransferase (340 aa).

Residues glycine 83, 86-87 (GD), threonine 91, 93-96 (NIST), 111-119 (KHGNRSITS), and serine 123 each bind 5-phospho-alpha-D-ribose 1-diphosphate. Residue glycine 83 coordinates anthranilate. Serine 95 contributes to the Mg(2+) binding site. Asparagine 114 provides a ligand contact to anthranilate. Arginine 169 contributes to the anthranilate binding site. Aspartate 228 and glutamate 229 together coordinate Mg(2+).

The protein belongs to the anthranilate phosphoribosyltransferase family. Homodimer. Mg(2+) is required as a cofactor.

The enzyme catalyses N-(5-phospho-beta-D-ribosyl)anthranilate + diphosphate = 5-phospho-alpha-D-ribose 1-diphosphate + anthranilate. The protein operates within amino-acid biosynthesis; L-tryptophan biosynthesis; L-tryptophan from chorismate: step 2/5. Catalyzes the transfer of the phosphoribosyl group of 5-phosphorylribose-1-pyrophosphate (PRPP) to anthranilate to yield N-(5'-phosphoribosyl)-anthranilate (PRA). The polypeptide is Anthranilate phosphoribosyltransferase (Solibacter usitatus (strain Ellin6076)).